A 61-amino-acid polypeptide reads, in one-letter code: Small ribosomal subunit protein uS14 (61 aa).

Zn(2+) contacts are provided by cysteine 24, cysteine 27, cysteine 40, and cysteine 43.

The protein belongs to the universal ribosomal protein uS14 family. Zinc-binding uS14 subfamily. As to quaternary structure, part of the 30S ribosomal subunit. Contacts proteins S3 and S10. Requires Zn(2+) as cofactor.

Functionally, binds 16S rRNA, required for the assembly of 30S particles and may also be responsible for determining the conformation of the 16S rRNA at the A site. The polypeptide is Small ribosomal subunit protein uS14 (Thermotoga maritima (strain ATCC 43589 / DSM 3109 / JCM 10099 / NBRC 100826 / MSB8)).